The chain runs to 418 residues: Serine hydroxymethyltransferase (418 aa).

(6S)-5,6,7,8-tetrahydrofolate contacts are provided by residues Leu121 and 125-127; that span reads GHL. At Lys230 the chain carries N6-(pyridoxal phosphate)lysine. 355–357 contacts (6S)-5,6,7,8-tetrahydrofolate; the sequence is SPF.

Belongs to the SHMT family. Homodimer. Pyridoxal 5'-phosphate is required as a cofactor.

The protein resides in the cytoplasm. It carries out the reaction (6R)-5,10-methylene-5,6,7,8-tetrahydrofolate + glycine + H2O = (6S)-5,6,7,8-tetrahydrofolate + L-serine. The protein operates within one-carbon metabolism; tetrahydrofolate interconversion. Its pathway is amino-acid biosynthesis; glycine biosynthesis; glycine from L-serine: step 1/1. Functionally, catalyzes the reversible interconversion of serine and glycine with tetrahydrofolate (THF) serving as the one-carbon carrier. This reaction serves as the major source of one-carbon groups required for the biosynthesis of purines, thymidylate, methionine, and other important biomolecules. Also exhibits THF-independent aldolase activity toward beta-hydroxyamino acids, producing glycine and aldehydes, via a retro-aldol mechanism. The protein is Serine hydroxymethyltransferase of Streptococcus agalactiae serotype III (strain NEM316).